The primary structure comprises 287 residues: 4-hydroxybenzoate octaprenyltransferase (287 aa).

6 helical membrane passes run 41 to 61 (VSLL…GCAI), 92 to 112 (VALA…LNAL), 133 to 153 (FFAI…PMAF), 160 to 180 (VPLL…AYDT), 197 to 217 (TSAL…YAVT), and 267 to 287 (NNWL…AQAF).

This sequence belongs to the UbiA prenyltransferase family. Mg(2+) is required as a cofactor.

It localises to the cell inner membrane. It carries out the reaction all-trans-octaprenyl diphosphate + 4-hydroxybenzoate = 4-hydroxy-3-(all-trans-octaprenyl)benzoate + diphosphate. The protein operates within cofactor biosynthesis; ubiquinone biosynthesis. Its function is as follows. Catalyzes the prenylation of para-hydroxybenzoate (PHB) with an all-trans polyprenyl group. Mediates the second step in the final reaction sequence of ubiquinone-8 (UQ-8) biosynthesis, which is the condensation of the polyisoprenoid side chain with PHB, generating the first membrane-bound Q intermediate 3-octaprenyl-4-hydroxybenzoate. In Paraburkholderia phymatum (strain DSM 17167 / CIP 108236 / LMG 21445 / STM815) (Burkholderia phymatum), this protein is 4-hydroxybenzoate octaprenyltransferase.